Here is a 296-residue protein sequence, read N- to C-terminus: Protoheme IX farnesyltransferase (296 aa).

9 helical membrane passes run 27 to 47, 48 to 68, 98 to 118, 120 to 140, 148 to 168, 175 to 195, 219 to 239, 242 to 262, and 274 to 294; these read IMYL…GTIH, PLIG…AGAL, ALEC…LTVN, VSAI…TMVL, IVIG…SVTG, LLLF…LSLL, HIMG…LYVA, VLYE…AYCL, and CMGL…AIAL.

Belongs to the UbiA prenyltransferase family. Protoheme IX farnesyltransferase subfamily.

It localises to the cell inner membrane. It carries out the reaction heme b + (2E,6E)-farnesyl diphosphate + H2O = Fe(II)-heme o + diphosphate. It functions in the pathway porphyrin-containing compound metabolism; heme O biosynthesis; heme O from protoheme: step 1/1. Converts heme B (protoheme IX) to heme O by substitution of the vinyl group on carbon 2 of heme B porphyrin ring with a hydroxyethyl farnesyl side group. This chain is Protoheme IX farnesyltransferase, found in Anaplasma phagocytophilum (strain HZ).